The chain runs to 106 residues: Large ribosomal subunit protein P2 (106 aa).

The interval 80–106 is disordered; it reads AAAAPAKKVVEEKKEESDDDMGMGLFD.

The protein belongs to the eukaryotic ribosomal protein P1/P2 family. P1 and P2 exist as dimers at the large ribosomal subunit. In terms of processing, phosphorylated.

Its function is as follows. Plays an important role in the elongation step of protein synthesis. In Dictyostelium discoideum (Social amoeba), this protein is Large ribosomal subunit protein P2 (rplp2).